Reading from the N-terminus, the 421-residue chain is Medium-chain specific acyl-CoA dehydrogenase, mitochondrial (421 aa).

Residues 1–25 constitute a mitochondrion transit peptide; sequence MIALFRRSCGVLRSLSHFDWRSQHT. Position 69 is an N6-acetyllysine; alternate (Lys-69). Lys-69 carries the N6-succinyllysine; alternate modification. Lys-79 is subject to N6-acetyllysine. 158 to 167 is an FAD binding site; that stretch reads YCVTEPVAGS. Ser-167 contacts octanoyl-CoA. At Lys-179 the chain carries N6-succinyllysine. 191-193 is an FAD binding site; sequence WIT. Residue Lys-212 is modified to N6-acetyllysine; alternate. Lys-212 is subject to N6-succinyllysine; alternate. Ser-216 serves as a coordination point for octanoyl-CoA. Residues Lys-217, Lys-259, and Lys-271 each carry the N6-acetyllysine; alternate modification. 3 positions are modified to N6-succinyllysine; alternate: Lys-217, Lys-259, and Lys-271. Asp-278 is a binding site for octanoyl-CoA. Lys-279 bears the N6-acetyllysine mark. Residue Arg-281 participates in octanoyl-CoA binding. Position 301 is an N6-acetyllysine (Lys-301). FAD contacts are provided by residues 306–308 and 316–317; these read RKT and HQ. Positions 349 and 351 each coordinate octanoyl-CoA. Position 351 is a phosphothreonine (Thr-351). 374 to 378 contacts FAD; the sequence is QIFGG. Position 401 (Glu-401) interacts with octanoyl-CoA. Residue Glu-401 is the Proton acceptor of the active site. Position 402–405 (402–405) interacts with FAD; sequence GTAQ.

Belongs to the acyl-CoA dehydrogenase family. As to quaternary structure, homotetramer. Interacts with the heterodimeric electron transfer flavoprotein ETF. FAD is required as a cofactor. In terms of processing, acetylated. Could occur at proximity of the cofactor-binding sites and reduce the catalytic activity. Could be deacetylated by SIRT3.

The protein localises to the mitochondrion matrix. It catalyses the reaction a medium-chain 2,3-saturated fatty acyl-CoA + oxidized [electron-transfer flavoprotein] + H(+) = a medium-chain (2E)-enoyl-CoA + reduced [electron-transfer flavoprotein]. The catalysed reaction is pentanoyl-CoA + oxidized [electron-transfer flavoprotein] + H(+) = (2E)-pentenoyl-CoA + reduced [electron-transfer flavoprotein]. The enzyme catalyses hexanoyl-CoA + oxidized [electron-transfer flavoprotein] + H(+) = (2E)-hexenoyl-CoA + reduced [electron-transfer flavoprotein]. It carries out the reaction octanoyl-CoA + oxidized [electron-transfer flavoprotein] + H(+) = (2E)-octenoyl-CoA + reduced [electron-transfer flavoprotein]. It catalyses the reaction decanoyl-CoA + oxidized [electron-transfer flavoprotein] + H(+) = (2E)-decenoyl-CoA + reduced [electron-transfer flavoprotein]. The catalysed reaction is dodecanoyl-CoA + oxidized [electron-transfer flavoprotein] + H(+) = (2E)-dodecenoyl-CoA + reduced [electron-transfer flavoprotein]. The enzyme catalyses tetradecanoyl-CoA + oxidized [electron-transfer flavoprotein] + H(+) = (2E)-tetradecenoyl-CoA + reduced [electron-transfer flavoprotein]. It carries out the reaction oxidized [electron-transfer flavoprotein] + hexadecanoyl-CoA + H(+) = (2E)-hexadecenoyl-CoA + reduced [electron-transfer flavoprotein]. It participates in lipid metabolism; mitochondrial fatty acid beta-oxidation. In terms of biological role, medium-chain specific acyl-CoA dehydrogenase is one of the acyl-CoA dehydrogenases that catalyze the first step of mitochondrial fatty acid beta-oxidation, an aerobic process breaking down fatty acids into acetyl-CoA and allowing the production of energy from fats. The first step of fatty acid beta-oxidation consists in the removal of one hydrogen from C-2 and C-3 of the straight-chain fatty acyl-CoA thioester, resulting in the formation of trans-2-enoyl-CoA. Electron transfer flavoprotein (ETF) is the electron acceptor that transfers electrons to the main mitochondrial respiratory chain via ETF-ubiquinone oxidoreductase (ETF dehydrogenase). Among the different mitochondrial acyl-CoA dehydrogenases, medium-chain specific acyl-CoA dehydrogenase acts specifically on acyl-CoAs with saturated 6 to 12 carbons long primary chains. This Bos taurus (Bovine) protein is Medium-chain specific acyl-CoA dehydrogenase, mitochondrial.